We begin with the raw amino-acid sequence, 56 residues long: Endoglucanase Cel5A (56 aa).

Catalysis depends on Glu45, which acts as the Nucleophile.

It belongs to the glycosyl hydrolase 5 (cellulase A) family.

It localises to the secreted. It is found in the extracellular space. It catalyses the reaction Endohydrolysis of (1-&gt;4)-beta-D-glucosidic linkages in cellulose, lichenin and cereal beta-D-glucans.. In terms of biological role, has avicelase and carboxymethylcellulase activity. The chain is Endoglucanase Cel5A from Gloeophyllum trabeum (Brown rot fungus).